A 64-amino-acid chain; its full sequence is UPF0434 protein Bcep18194_A5877 (64 aa).

Belongs to the UPF0434 family.

This Burkholderia lata (strain ATCC 17760 / DSM 23089 / LMG 22485 / NCIMB 9086 / R18194 / 383) protein is UPF0434 protein Bcep18194_A5877.